A 237-amino-acid chain; its full sequence is Large ribosomal subunit protein uL3 (237 aa).

2 disordered regions span residues 133 to 155 (ASHG…DPGK) and 213 to 237 (PENA…EGGE). The segment covering 135 to 150 (HGNSITHRSHGSTGQR) has biased composition (polar residues). Q151 is modified (N5-methylglutamine). The segment covering 220-237 (AGLRAGAKAEAAATEGGE) has biased composition (low complexity).

Belongs to the universal ribosomal protein uL3 family. As to quaternary structure, part of the 50S ribosomal subunit. Forms a cluster with proteins L14 and L19. Methylated by PrmB.

Functionally, one of the primary rRNA binding proteins, it binds directly near the 3'-end of the 23S rRNA, where it nucleates assembly of the 50S subunit. This is Large ribosomal subunit protein uL3 from Brucella abortus (strain S19).